A 493-amino-acid polypeptide reads, in one-letter code: UDP-N-acetylmuramate--L-alanine ligase (493 aa).

ATP is bound at residue 126–132 (GTHGKTT).

It belongs to the MurCDEF family.

The protein localises to the cytoplasm. The catalysed reaction is UDP-N-acetyl-alpha-D-muramate + L-alanine + ATP = UDP-N-acetyl-alpha-D-muramoyl-L-alanine + ADP + phosphate + H(+). Its pathway is cell wall biogenesis; peptidoglycan biosynthesis. In terms of biological role, cell wall formation. The protein is UDP-N-acetylmuramate--L-alanine ligase of Hamiltonella defensa subsp. Acyrthosiphon pisum (strain 5AT).